The sequence spans 528 residues: ATP synthase subunit beta 2 (528 aa).

The span at 1-10 (MADPQATNGT) shows a compositional bias: polar residues. The segment at 1-27 (MADPQATNGTGAACAERDASDVGDARD) is disordered. Basic and acidic residues predominate over residues 15–27 (AERDASDVGDARD). 179-186 (GGAGVGKT) contributes to the ATP binding site. The span at 488–499 (AAAREADARREA) shows a compositional bias: basic and acidic residues. The tract at residues 488–528 (AAAREADARREAAAAASGAGPGTTSDPASGSAEPQGARHGR) is disordered.

This sequence belongs to the ATPase alpha/beta chains family. As to quaternary structure, F-type ATPases have 2 components, CF(1) - the catalytic core - and CF(0) - the membrane proton channel. CF(1) has five subunits: alpha(3), beta(3), gamma(1), delta(1), epsilon(1). CF(0) has three main subunits: a(1), b(2) and c(9-12). The alpha and beta chains form an alternating ring which encloses part of the gamma chain. CF(1) is attached to CF(0) by a central stalk formed by the gamma and epsilon chains, while a peripheral stalk is formed by the delta and b chains.

The protein resides in the cell inner membrane. The enzyme catalyses ATP + H2O + 4 H(+)(in) = ADP + phosphate + 5 H(+)(out). Its function is as follows. Produces ATP from ADP in the presence of a proton gradient across the membrane. The catalytic sites are hosted primarily by the beta subunits. The protein is ATP synthase subunit beta 2 of Burkholderia pseudomallei (strain 1106a).